Here is a 900-residue protein sequence, read N- to C-terminus: MQLHILNNPKDAALAADAEFLKQSLFNLLHEEASPLVVETVKLLSTSDDSAALIEKVLPQLDEQQTHDLTLACGLFAQILNIAEDVHHERRRQIHEEAGRGGAEGSLTETVRRLKAGKADGKSVQRQLDNTSVTAVLTAHPTEVQRQTVLNFNRRIRALLPQRERCTNADALARLRREIDTILLGLWQTSETRRHKLSVNDEINNGVSIFPMSFFEALPKLYRKMEHDFQTAYPDVRVPDILKIGGWIGGDRDGNPFVSAETLRFAFRRHADAVFRFYRGELDKLYRELPLSIRRVKVNGDVMALSDKSPDEETARAEEPYRRAIAYIMARAMGKARALGLGMGCKFGFLEPYASAQEFLDDLKKLQHSLIDNGSRLLAEGRLADLIRSVSVFGFHMMPLDLRQHAGKHADVVAELFQHAGLEDYNSLNEEQKQAALLRELSHQRPLYSPFITYSDHTRHELAIFNEARKIKDEFGEDAVTQSIISNCEQPSDLLALALLLKETGLLAVENGKPKSRINIVPLFETIEALENACPVMETMFRLDWYGALLESRGNIQEIMLGYSDSNKDGGYVTSSWCLYQAELGLVELFKKYDVRMRLFHGRGGSVGRGGGPSYQAILAQPAGSVAGQIRITEQGEVITAKYADPGNAQRNLETLVAATLEASILPDKKDPDAKLMQDLSDVSFKYYRELITHPDFIDYFLQTSPIQEIATLNLGSRPASRKTLARIQDLRAIPWVFSWMQNRLMLPAWYGFGSAVETLCEGNPDTLAALREHAQSNPFFQAMLSNMEQVMAKTDITLAENYAGLSESPDKAKVIFGMIKEEYRRSRKALLDLLQTEELLRDNRSLARSLALRIPYLNALNGLQVAMLKRLRKEPDNPHALLMVHLTINGVAQGLRNTG.

Residues His-140 and Lys-568 contribute to the active site.

The protein belongs to the PEPCase type 1 family. Requires Mg(2+) as cofactor.

It carries out the reaction oxaloacetate + phosphate = phosphoenolpyruvate + hydrogencarbonate. In terms of biological role, forms oxaloacetate, a four-carbon dicarboxylic acid source for the tricarboxylic acid cycle. This chain is Phosphoenolpyruvate carboxylase, found in Neisseria meningitidis serogroup A / serotype 4A (strain DSM 15465 / Z2491).